A 305-amino-acid chain; its full sequence is GPI-anchored hemophore cfmA (305 aa).

An N-terminal signal peptide occupies residues 1–18 (MKASVSLLLLSAASMASA). The region spanning 19–111 (AMSVSQCAQM…GSGSGSDSGS (93 aa)) is the CFEM domain. Cystine bridges form between C25–C68, C29–C63, C42–C49, and C51–C84. Heme is bound at residue D46. The disordered stretch occupies residues 92-287 (TATGAGGSSS…STGNVAPRGA (196 aa)). Positions 95-149 (GAGGSSSGSGSGSDSGSGSGSGSGSGSGSGSGSGSSSGSGSGSGSGSGSGSGSNS) are enriched in gly residues. Composition is skewed to low complexity over residues 150–186 (GSGS…NSTT), 196–259 (GASS…TATG), and 267–287 (GSAS…PRGA). 5 N-linked (GlcNAc...) asparagine glycosylation sites follow: N183, N203, N237, N243, and N275. S276 carries GPI-like-anchor amidated serine lipidation. Positions 277–305 (SSTGNVAPRGAVVGSGAVGALALAALIIL) are cleaved as a propeptide — removed in mature form.

This sequence belongs to the RBT5 family. Post-translationally, the GPI-like anchor contains a phosphoceramide lipid group. In terms of processing, the GPI-anchor is attached to the protein in the endoplasmic reticulum and serves to target the protein to the cell surface. There, the glucosamine-inositol phospholipid moiety is cleaved off and the GPI-modified mannoprotein is covalently attached via its lipidless GPI glycan remnant to the 1,6-beta-glucan of the outer cell wall layer.

The protein resides in the secreted. The protein localises to the cell wall. It localises to the cell membrane. GPI-anchored cell wall protein involved in stabilizing the cell wall. Not implicated in virulence, heme uptake and biofilm formation. The chain is GPI-anchored hemophore cfmA from Aspergillus fumigatus (strain ATCC MYA-4609 / CBS 101355 / FGSC A1100 / Af293) (Neosartorya fumigata).